Consider the following 653-residue polypeptide: MGKIIGIDLGTTNSCVAIMEGNSVKVIENSEGARTTPSIIAYMEDGEILVGAPAKRQSVTNPKNTLYAVKRLIGRRFEEKEVQKDIGLMPYKIIKADNGDAWVEVRDQKLAPPQISAEVLRKMKKTAEDYLGEPVTEAVITVPAYFNDSQRQATKDAGRIAGLEVKRIINEPTAAALAFGLDKNEKGDRKIAVYDLGGGTFDVSIIEIADVDGEKQFEVLSTNGDTFLGGEDFDQRIIDYIIGEFKKEQGVDLSKDVLALQRLKESAEKAKIELSSSQQTEINLPYITADASGPKHLNLKITRAKLEALVEELIERTIEPCRVAIKDAGVKVGEIDDVILVGGMTRMPKVQEKVKEFFGKDPRRDVNPDEAVAVGAAIQGQVLSGDRKDVLLLDVTPLSLGIETLGGVMTKMINKNTTIPTKHSQVYSTADDNQGAVTIKVFQGEREMAAGNKLLGEFNLEGIPPAPRGTPQIEVSFDIDANGILHVGAKDKATGKENRITIKANSGLSEAEIEKMVKDAEANAEEDHKLRELADARNQGDALVHSTKKALTEYGDKLEAGEKEKIESALKDLEETLKSGSSDKAAIEAKIEVVATASQKMGEKMYADMQAAQGAEAAAAGAAGAGGAGASAGGASQQQDDVVDAEFKEVKKD.

Threonine 200 carries the post-translational modification Phosphothreonine; by autocatalysis. A disordered region spans residues 615-653; sequence AEAAAAGAAGAGGAGASAGGASQQQDDVVDAEFKEVKKD. Residues 623 to 632 show a composition bias toward gly residues; sequence AGAGGAGASA.

It belongs to the heat shock protein 70 family.

In terms of biological role, acts as a chaperone. The polypeptide is Chaperone protein DnaK (Paraburkholderia xenovorans (strain LB400)).